The primary structure comprises 475 residues: MESSSAETNSTGLHLEPQYQPETILAMAILGLTFVLGLPGNGLVLWVAGLKMRRTVNTVWFLHLTVADFVCCLSLPFSMAHLALRGYWPYGEILCKFIPTVIIFNMFASVFLLTAISLDRCLMVLKPIWCQNHRNVRTACIICGCIWLVAFVLCIPVFVYRETFTLENHTICTYNFSPGSFDYLDYAYDRDAWGYGTPDPIVQLPGEMEHRSDPSSFQTQDGPWSVTTTLYSQTSQRPSEDSFHMDSAKLSGQGKYVDVVLPTNLCGLPMEENRTNTLHNAAFLSSDLDVSNATQKCLSTPEPPQDFWDDLSPFTHEYRTPRLLKVITFTRLVVGFLLPMIIMVACYTLIIFRMRRVRVVKSWNKALHLAMVVVTIFLICWAPYHVFGVLILFINPESRVGAALLSWDHVSIALASANSCFNPFLYALLGRDLRKRVRQSMKGILEAAFSEDISKSTSFIQAKAFSEKHSLSTNV.

The Extracellular portion of the chain corresponds to 1 to 23 (MESSSAETNSTGLHLEPQYQPET). An N-linked (GlcNAc...) asparagine glycan is attached at N9. Residues 24 to 46 (ILAMAILGLTFVLGLPGNGLVLW) form a helical membrane-spanning segment. Residues 47-57 (VAGLKMRRTVN) lie on the Cytoplasmic side of the membrane. Residues 58 to 80 (TVWFLHLTVADFVCCLSLPFSMA) traverse the membrane as a helical segment. The Extracellular portion of the chain corresponds to 81–96 (HLALRGYWPYGEILCK). A disulfide bridge links C95 with C172. A helical membrane pass occupies residues 97 to 118 (FIPTVIIFNMFASVFLLTAISL). Residues 119–139 (DRCLMVLKPIWCQNHRNVRTA) lie on the Cytoplasmic side of the membrane. A helical transmembrane segment spans residues 140-160 (CIICGCIWLVAFVLCIPVFVY). Residues 161 to 331 (RETFTLENHT…RLLKVITFTR (171 aa)) lie on the Extracellular side of the membrane. Residue N168 is glycosylated (N-linked (GlcNAc...) asparagine). A sulfotyrosine mark is found at Y174 and Y183. 2 N-linked (GlcNAc...) asparagine glycosylation sites follow: N273 and N292. Residues 332-351 (LVVGFLLPMIIMVACYTLII) form a helical membrane-spanning segment. Residues 352–368 (FRMRRVRVVKSWNKALH) lie on the Cytoplasmic side of the membrane. A helical transmembrane segment spans residues 369-391 (LAMVVVTIFLICWAPYHVFGVLI). The Extracellular portion of the chain corresponds to 392-408 (LFINPESRVGAALLSWD). The chain crosses the membrane as a helical span at residues 409 to 429 (HVSIALASANSCFNPFLYALL). At 430–475 (GRDLRKRVRQSMKGILEAAFSEDISKSTSFIQAKAFSEKHSLSTNV) the chain is on the cytoplasmic side. S450 carries the post-translational modification Phosphoserine.

This sequence belongs to the G-protein coupled receptor 1 family. Interacts with VGF-derived peptide TLQP-21. As to expression, expressed in the heart, kidney, lung, liver, peritoneal macrophages and spleen.

Its subcellular location is the cell membrane. Its function is as follows. Receptor for the chemotactic and inflammatory peptide anaphylatoxin C3a. This receptor stimulates chemotaxis, granule enzyme release and superoxide anion production. This is C3a anaphylatoxin chemotactic receptor (C3AR1) from Cavia porcellus (Guinea pig).